Consider the following 433-residue polypeptide: Legumain (433 aa).

Residues 1–17 form the signal peptide; that stretch reads MVWKVAVFLSVALGIGA. The N-linked (GlcNAc...) asparagine glycan is linked to Asn91. Residue His148 is part of the active site. The N-linked (GlcNAc...) asparagine glycan is linked to Asn167. Cys189 serves as the catalytic Nucleophile. N-linked (GlcNAc...) asparagine glycosylation is found at Asn263 and Asn272. The propeptide occupies 324–433; the sequence is DLEESRQLTE…SMDHVCLGHY (110 aa). 2 cysteine pairs are disulfide-bonded: Cys378–Cys412 and Cys390–Cys429.

The protein belongs to the peptidase C13 family. Homodimer before autocatalytic removal of the propeptide. Monomer after autocatalytic processing. May interact with integrins. Post-translationally, activated by autocatalytic processing at pH 4. Ubiquitous. Particularly abundant in kidney, heart and placenta.

It localises to the lysosome. It carries out the reaction Hydrolysis of proteins and small molecule substrates at -Asn-|-Xaa- bonds.. With respect to regulation, inhibited by CST6. Has a strict specificity for hydrolysis of asparaginyl bonds. Can also cleave aspartyl bonds slowly, especially under acidic conditions. Involved in the processing of proteins for MHC class II antigen presentation in the lysosomal/endosomal system. Also involved in MHC class I antigen presentation in cross-presenting dendritic cells by mediating cleavage and maturation of Perforin-2 (MPEG1), thereby promoting antigen translocation in the cytosol. Required for normal lysosomal protein degradation in renal proximal tubules. Required for normal degradation of internalized EGFR. Plays a role in the regulation of cell proliferation via its role in EGFR degradation. The protein is Legumain of Homo sapiens (Human).